We begin with the raw amino-acid sequence, 71 residues long: Large ribosomal subunit protein bL31 (71 aa).

C16, C18, C37, and C40 together coordinate Zn(2+).

It belongs to the bacterial ribosomal protein bL31 family. Type A subfamily. In terms of assembly, part of the 50S ribosomal subunit. The cofactor is Zn(2+).

Its function is as follows. Binds the 23S rRNA. The protein is Large ribosomal subunit protein bL31 of Pseudomonas entomophila (strain L48).